The primary structure comprises 155 residues: Ribosomal RNA large subunit methyltransferase H (155 aa).

S-adenosyl-L-methionine contacts are provided by residues Leu-72, Gly-103, and 122–127 (LSPLTL).

Belongs to the RNA methyltransferase RlmH family. Homodimer.

The protein resides in the cytoplasm. The catalysed reaction is pseudouridine(1915) in 23S rRNA + S-adenosyl-L-methionine = N(3)-methylpseudouridine(1915) in 23S rRNA + S-adenosyl-L-homocysteine + H(+). Specifically methylates the pseudouridine at position 1915 (m3Psi1915) in 23S rRNA. This chain is Ribosomal RNA large subunit methyltransferase H, found in Actinobacillus pleuropneumoniae serotype 3 (strain JL03).